We begin with the raw amino-acid sequence, 81 residues long: Small ribosomal subunit protein uS15 (81 aa).

The protein belongs to the universal ribosomal protein uS15 family. In terms of assembly, part of the 30S ribosomal subunit. Forms a bridge to the 50S subunit in the 70S ribosome, contacting the 23S rRNA.

In terms of biological role, one of the primary rRNA binding proteins, it binds directly to 16S rRNA where it helps nucleate assembly of the platform of the 30S subunit by binding and bridging several RNA helices of the 16S rRNA. Its function is as follows. Forms an intersubunit bridge (bridge B4) with the 23S rRNA of the 50S subunit in the ribosome. In Mesomycoplasma hyorhinis (Mycoplasma hyorhinis), this protein is Small ribosomal subunit protein uS15.